The primary structure comprises 234 residues: Fibroblast growth factor-binding protein 1 (234 aa).

Residues 1–23 (MRTHGLTLLSLLLLAVPMLLVEA) form the signal peptide. The tract at residues 25–59 (KEGRNRRGSKASADESLALGKPGKEPRSQPTNYPI) is disordered. 3 disulfide bridges follow: C71-C88, C97-C130, and C106-C142. A glycan (N-linked (GlcNAc...) asparagine) is linked at N155. The segment at 169 to 200 (MEPSPMDTVEVTTSSSPEKTQTMATKDPQCEE) is disordered. An O-linked (GalNAc...) serine glycan is attached at S172. Residues 178-192 (EVTTSSSPEKTQTMA) show a composition bias toward polar residues. Residues 194 to 234 (KDPQCEEEDLKNQRKAALEYCGETWGSLCNFFLSMVQGSSC) form a sufficient for interaction with FGF2 and FGF2-induced effects region. 2 cysteine pairs are disulfide-bonded: C198-C234 and C214-C222.

The protein belongs to the fibroblast growth factor-binding protein family. In terms of assembly, found in a complex with FGFBP1, FGF1 and FGF2. Interacts with FGF1, FGF7, FGF10, FGF22 and HSPG2. Interacts with FGF2.

Its subcellular location is the secreted. It localises to the extracellular space. The protein resides in the cell membrane. In terms of biological role, acts as a carrier protein that release fibroblast-binding factors (FGFs) from the extracellular matrix (EM) storage and thus enhance the mitogenic activity of FGFs. Enhances FGF2 signaling during tissue repair, angiogenesis and in tumor growth. This chain is Fibroblast growth factor-binding protein 1 (FGFBP1), found in Bos taurus (Bovine).